The chain runs to 303 residues: uncharacterized protein (303 aa).

NADP(+) contacts are provided by residues 7–12 and asparagine 101; that span reads GAGGVG. Lysine 184 functions as the Proton donor in the catalytic mechanism. Residue glutamate 267 coordinates NADP(+).

The protein belongs to the ketopantoate reductase family.

This is an uncharacterized protein from Bacillus subtilis (strain 168).